Reading from the N-terminus, the 610-residue chain is UvrABC system protein C (610 aa).

Residues 16 to 94 (SQPGVYRMYD…IKLYQPRYNV (79 aa)) enclose the GIY-YIG domain. The 36-residue stretch at 204-239 (DQVLTQLISRMETASQNLEFEEAARIRDQIQAVRRV) folds into the UVR domain.

It belongs to the UvrC family. In terms of assembly, interacts with UvrB in an incision complex.

It is found in the cytoplasm. Functionally, the UvrABC repair system catalyzes the recognition and processing of DNA lesions. UvrC both incises the 5' and 3' sides of the lesion. The N-terminal half is responsible for the 3' incision and the C-terminal half is responsible for the 5' incision. In Escherichia coli O45:K1 (strain S88 / ExPEC), this protein is UvrABC system protein C.